A 133-amino-acid polypeptide reads, in one-letter code: Large-conductance mechanosensitive channel (133 aa).

The next 2 membrane-spanning stretches (helical) occupy residues 10-30 (FAMRGNVVDMAVGVIIGGAFG) and 76-96 (GAFIQTVFDFVIIAFAIFLMI).

Belongs to the MscL family. Homopentamer.

The protein resides in the cell inner membrane. Channel that opens in response to stretch forces in the membrane lipid bilayer. May participate in the regulation of osmotic pressure changes within the cell. The polypeptide is Large-conductance mechanosensitive channel (Pasteurella multocida (strain Pm70)).